Here is a 272-residue protein sequence, read N- to C-terminus: EID1-like F-box protein 3 (272 aa).

Positions 29–81 (SGKSGIENERVLVLVFESISWDIHTLCTIASLSRRFCAIARRILWRRLCVNRA) constitute an F-box domain.

The chain is EID1-like F-box protein 3 (EDL3) from Arabidopsis thaliana (Mouse-ear cress).